A 503-amino-acid polypeptide reads, in one-letter code: Probable cytosol aminopeptidase (503 aa).

Mn(2+)-binding residues include Lys-274 and Asp-279. Lys-286 is a catalytic residue. Mn(2+)-binding residues include Asp-297, Asp-356, and Glu-358. The active site involves Arg-360.

The protein belongs to the peptidase M17 family. It depends on Mn(2+) as a cofactor.

Its subcellular location is the cytoplasm. The enzyme catalyses Release of an N-terminal amino acid, Xaa-|-Yaa-, in which Xaa is preferably Leu, but may be other amino acids including Pro although not Arg or Lys, and Yaa may be Pro. Amino acid amides and methyl esters are also readily hydrolyzed, but rates on arylamides are exceedingly low.. It catalyses the reaction Release of an N-terminal amino acid, preferentially leucine, but not glutamic or aspartic acids.. Functionally, presumably involved in the processing and regular turnover of intracellular proteins. Catalyzes the removal of unsubstituted N-terminal amino acids from various peptides. The polypeptide is Probable cytosol aminopeptidase (Burkholderia multivorans (strain ATCC 17616 / 249)).